We begin with the raw amino-acid sequence, 372 residues long: Chaperone protein DnaJ (372 aa).

The J domain maps to 5–70 (DYYEVLGVAK…DKRAAYDQFG (66 aa)). Residues 133–211 (GTETKIRIPT…CHGEGRVKKH (79 aa)) form a CR-type zinc finger. The Zn(2+) site is built by Cys-146, Cys-149, Cys-163, Cys-166, Cys-185, Cys-188, Cys-199, and Cys-202. 4 CXXCXGXG motif repeats span residues 146–153 (CGTCHGSG), 163–170 (CSACGGHG), 185–192 (CPRCGGTG), and 199–206 (CPSCHGEG).

The protein belongs to the DnaJ family. Homodimer. It depends on Zn(2+) as a cofactor.

It is found in the cytoplasm. Participates actively in the response to hyperosmotic and heat shock by preventing the aggregation of stress-denatured proteins and by disaggregating proteins, also in an autonomous, DnaK-independent fashion. Unfolded proteins bind initially to DnaJ; upon interaction with the DnaJ-bound protein, DnaK hydrolyzes its bound ATP, resulting in the formation of a stable complex. GrpE releases ADP from DnaK; ATP binding to DnaK triggers the release of the substrate protein, thus completing the reaction cycle. Several rounds of ATP-dependent interactions between DnaJ, DnaK and GrpE are required for fully efficient folding. Also involved, together with DnaK and GrpE, in the DNA replication of plasmids through activation of initiation proteins. The chain is Chaperone protein DnaJ from Thiobacillus denitrificans (strain ATCC 25259 / T1).